We begin with the raw amino-acid sequence, 156 residues long: ATP synthase subunit b (156 aa).

Residues 7-29 form a helical membrane-spanning segment; sequence LIAQAISFAILIWFTTKFVWPYL.

Belongs to the ATPase B chain family. As to quaternary structure, F-type ATPases have 2 components, F(1) - the catalytic core - and F(0) - the membrane proton channel. F(1) has five subunits: alpha(3), beta(3), gamma(1), delta(1), epsilon(1). F(0) has three main subunits: a(1), b(2) and c(10-14). The alpha and beta chains form an alternating ring which encloses part of the gamma chain. F(1) is attached to F(0) by a central stalk formed by the gamma and epsilon chains, while a peripheral stalk is formed by the delta and b chains.

It localises to the cell inner membrane. F(1)F(0) ATP synthase produces ATP from ADP in the presence of a proton or sodium gradient. F-type ATPases consist of two structural domains, F(1) containing the extramembraneous catalytic core and F(0) containing the membrane proton channel, linked together by a central stalk and a peripheral stalk. During catalysis, ATP synthesis in the catalytic domain of F(1) is coupled via a rotary mechanism of the central stalk subunits to proton translocation. Its function is as follows. Component of the F(0) channel, it forms part of the peripheral stalk, linking F(1) to F(0). This chain is ATP synthase subunit b, found in Methylobacillus flagellatus (strain ATCC 51484 / DSM 6875 / VKM B-1610 / KT).